Here is a 447-residue protein sequence, read N- to C-terminus: Rab GDP dissociation inhibitor alpha (447 aa).

It belongs to the Rab GDI family. Interacts with RHOH. Interacts with the non-phosphorylated forms of RAB1A, RAB3A, RAB5A, RAB5B, RAB5C, RAB8A, RAB8B, RAB10, RAB12, RAB35, and RAB43.

It is found in the cytoplasm. It localises to the golgi apparatus. The protein resides in the trans-Golgi network. Its function is as follows. Regulates the GDP/GTP exchange reaction of most Rab proteins by inhibiting the dissociation of GDP from them, and the subsequent binding of GTP to them. Promotes the dissociation of GDP-bound Rab proteins from the membrane and inhibits their activation. Promotes the dissociation of RAB1A, RAB3A, RAB5A and RAB10 from membranes. The sequence is that of Rab GDP dissociation inhibitor alpha (GDI1) from Macaca fascicularis (Crab-eating macaque).